The chain runs to 101 residues: Putative defensin-like protein 86 (101 aa).

An N-terminal signal peptide occupies residues 1–27 (MAITKMSSLIILSLMMLTFIYIPMISG). 4 cysteine pairs are disulfide-bonded: Cys35–Cys71, Cys39–Cys59, Cys45–Cys69, and Cys49–Cys70.

This sequence belongs to the DEFL family.

It localises to the secreted. The sequence is that of Putative defensin-like protein 86 (LCR82) from Arabidopsis thaliana (Mouse-ear cress).